Consider the following 168-residue polypeptide: Crossover junction endodeoxyribonuclease RuvC (168 aa).

Active-site residues include Asp8, Glu68, and Asp140. Residues Asp8, Glu68, and Asp140 each contribute to the Mg(2+) site.

This sequence belongs to the RuvC family. Homodimer which binds Holliday junction (HJ) DNA. The HJ becomes 2-fold symmetrical on binding to RuvC with unstacked arms; it has a different conformation from HJ DNA in complex with RuvA. In the full resolvosome a probable DNA-RuvA(4)-RuvB(12)-RuvC(2) complex forms which resolves the HJ. It depends on Mg(2+) as a cofactor.

It is found in the cytoplasm. The enzyme catalyses Endonucleolytic cleavage at a junction such as a reciprocal single-stranded crossover between two homologous DNA duplexes (Holliday junction).. Its function is as follows. The RuvA-RuvB-RuvC complex processes Holliday junction (HJ) DNA during genetic recombination and DNA repair. Endonuclease that resolves HJ intermediates. Cleaves cruciform DNA by making single-stranded nicks across the HJ at symmetrical positions within the homologous arms, yielding a 5'-phosphate and a 3'-hydroxyl group; requires a central core of homology in the junction. The consensus cleavage sequence is 5'-(A/T)TT(C/G)-3'. Cleavage occurs on the 3'-side of the TT dinucleotide at the point of strand exchange. HJ branch migration catalyzed by RuvA-RuvB allows RuvC to scan DNA until it finds its consensus sequence, where it cleaves and resolves the cruciform DNA. This Gluconacetobacter diazotrophicus (strain ATCC 49037 / DSM 5601 / CCUG 37298 / CIP 103539 / LMG 7603 / PAl5) protein is Crossover junction endodeoxyribonuclease RuvC.